Consider the following 429-residue polypeptide: Putative protease Do-like 14 (429 aa).

A disordered region spans residues 87 to 113 (KSEAPINDEKGVSVEASDSSSKPSNGY). The serine protease stretch occupies residues 113-338 (YLGRDTIANA…IRPWIGLKMV (226 aa)). Catalysis depends on charge relay system residues His165, Asp203, and Ser281. The 107-residue stretch at 318–424 (IIEHFKKSGR…RVTLEVIPEE (107 aa)) folds into the PDZ domain.

The protein belongs to the peptidase S1C family.

Functionally, putative serine protease. In Arabidopsis thaliana (Mouse-ear cress), this protein is Putative protease Do-like 14 (DEGP14).